We begin with the raw amino-acid sequence, 302 residues long: uncharacterized protein (302 aa).

E48 is a catalytic residue.

It belongs to the PhzF family.

This is an uncharacterized protein from Clostridium acetobutylicum (strain ATCC 824 / DSM 792 / JCM 1419 / IAM 19013 / LMG 5710 / NBRC 13948 / NRRL B-527 / VKM B-1787 / 2291 / W).